A 256-amino-acid polypeptide reads, in one-letter code: Peroxisomal membrane protein PMP30A (256 aa).

This sequence belongs to the peroxin-11 family.

Its subcellular location is the peroxisome membrane. In terms of biological role, involved in peroxisomal proliferation. Could participate in peroxisomal elongation or fission. May be involved in parceling of peroxisomes into regular quanta. In Candida boidinii (Yeast), this protein is Peroxisomal membrane protein PMP30A (PEX11A).